We begin with the raw amino-acid sequence, 258 residues long: Regulatory protein RecX (258 aa).

The protein belongs to the RecX family.

Its subcellular location is the cytoplasm. In terms of biological role, modulates RecA activity. The chain is Regulatory protein RecX from Streptococcus equi subsp. zooepidemicus (strain MGCS10565).